Reading from the N-terminus, the 358-residue chain is Period circadian protein (358 aa).

PAS domains lie at 1–120 (GVVM…QTVP) and 138–240 (FIMR…YIIE).

In terms of assembly, forms a heterodimer with timeless (TIM); the complex then translocates into the nucleus. Phosphorylated with a circadian rhythmicity.

Its subcellular location is the nucleus. Functionally, involved in the generation of biological rhythms. The biological cycle depends on the rhythmic formation and nuclear localization of the tim-per complex. Light induces the degradation of tim, which promotes elimination of per. Nuclear activity of the heterodimer coordinatively regulates per and tim transcription negative feedback loop. Behaves as a negative element in circadian transcriptional loop. Does not appear to bind DNA, suggesting indirect transcriptional inhibition. This Hyalophora cecropia (Cecropia moth) protein is Period circadian protein (per).